The chain runs to 309 residues: MGIEGRGSGAMQSKKTIKWLKQALVLSSIVNILLLLLIYSTVFRKDIYKLRVFPGNLIAKSSRIGKIPEDILERLENASFADLLALLQEERMVFGHPLKSWALGVSIQKYFVDIAPMLTHPLTFIRLKSPERTWLLPDINDQEFTRICQYLLTERFPFSSRGFFRIMVRDCEAGMVDEDVLYRFCHLPEFLYVRSLLFGAEIEAASVASLARMIIQGGEDLFFSLCCLENRQTAISDHQRRCFLKAYVDRQEPLAALLLLVHDADWVLHEFSDSDLQSFIQLLPREAHYTKKFLGCVAQSCRLGILLEG.

Residues 23–43 form a helical membrane-spanning segment; that stretch reads ALVLSSIVNILLLLLIYSTVF.

It belongs to the chlamydial CPn_0593/CT_474/TC_0759 family.

It is found in the membrane. This is an uncharacterized protein from Chlamydia trachomatis serovar D (strain ATCC VR-885 / DSM 19411 / UW-3/Cx).